Here is a 415-residue protein sequence, read N- to C-terminus: Gamma-glutamyl phosphate reductase (415 aa).

This sequence belongs to the gamma-glutamyl phosphate reductase family.

The protein resides in the cytoplasm. It carries out the reaction L-glutamate 5-semialdehyde + phosphate + NADP(+) = L-glutamyl 5-phosphate + NADPH + H(+). Its pathway is amino-acid biosynthesis; L-proline biosynthesis; L-glutamate 5-semialdehyde from L-glutamate: step 2/2. Its function is as follows. Catalyzes the NADPH-dependent reduction of L-glutamate 5-phosphate into L-glutamate 5-semialdehyde and phosphate. The product spontaneously undergoes cyclization to form 1-pyrroline-5-carboxylate. In Leuconostoc citreum (strain KM20), this protein is Gamma-glutamyl phosphate reductase.